The following is a 466-amino-acid chain: Soluble pyridine nucleotide transhydrogenase (466 aa).

Position 36-45 (36-45 (ERYHNIGGGC)) interacts with FAD.

It belongs to the class-I pyridine nucleotide-disulfide oxidoreductase family. FAD serves as cofactor.

It is found in the cytoplasm. The catalysed reaction is NAD(+) + NADPH = NADH + NADP(+). In terms of biological role, conversion of NADPH, generated by peripheral catabolic pathways, to NADH, which can enter the respiratory chain for energy generation. The sequence is that of Soluble pyridine nucleotide transhydrogenase from Erwinia tasmaniensis (strain DSM 17950 / CFBP 7177 / CIP 109463 / NCPPB 4357 / Et1/99).